A 422-amino-acid chain; its full sequence is ATP phosphoribosyltransferase regulatory subunit (422 aa).

This sequence belongs to the class-II aminoacyl-tRNA synthetase family. HisZ subfamily. As to quaternary structure, heteromultimer composed of HisG and HisZ subunits.

It is found in the cytoplasm. It participates in amino-acid biosynthesis; L-histidine biosynthesis; L-histidine from 5-phospho-alpha-D-ribose 1-diphosphate: step 1/9. Functionally, required for the first step of histidine biosynthesis. May allow the feedback regulation of ATP phosphoribosyltransferase activity by histidine. The polypeptide is ATP phosphoribosyltransferase regulatory subunit (Clostridium botulinum (strain Langeland / NCTC 10281 / Type F)).